Reading from the N-terminus, the 660-residue chain is MIKNYQEYKEAVEKLKRWAYAYYVLDNPEVPDEVYDKLYREVEEYEKAHPDQIDPTSPTQRIGAEPAKEFKKIKHLSKMWSMEDVFNQREMHEWLERVYKNAGRKDLQFYIEPKFDGASLNLIYENGLLKSAATRGDGEVGEDVTANAKTIPSIPLGIDYKGLIEIRGEVVIRKDDFEKLNHERALKGESTFANPRNAAAGSLRQLDPKVTAQRKLYFYPWDIGYNTLNFKYQHEKMDFVYQQGFIKPFKRAICENEEEIQQLYEEFSKERDKLPVMLDGMVVKVDEIALHEILGYTVKYPRWMVAYKFPAVEKMTRIIDIVPQVGRTGVITPVAILEPVEIEGVVVERATLHNYAEIERKDIRIGDMVIVIRSGDVIPEVTKVLTQYRTGKEKKVERPKVCPVCGQPVLDEGILIKCQNLSCPARVVNSIIYFASKQCLDISGLGEATVKLLYEKGLVKDVVDLFKLKKEDLLRLPGFAEKKAQNLIDATQSVKGVECWRFVNALGIEHIGEVASKKLCEKFGLDWYKAPKEKLYEIEGFGPEMVRSIEEFVEVNKEKIEKLIELLQPTEPKKEEEVENSPLAHKTVVLTGEMKLPRSKIKELLERAGAHVTNSVSHHTDYVFYGENPGSKFQKAQQLGVPLLPEEKMWELLKEAGIEA.

Residues 32 to 36 (DEVYD), 81 to 82 (SM), and Glu112 each bind NAD(+). The N6-AMP-lysine intermediate role is filled by Lys114. NAD(+)-binding residues include Arg135, Glu169, Lys284, and Lys308. 4 residues coordinate Zn(2+): Cys402, Cys405, Cys418, and Cys423. The BRCT domain occupies 578-660 (VENSPLAHKT…ELLKEAGIEA (83 aa)).

This sequence belongs to the NAD-dependent DNA ligase family. LigA subfamily. Mg(2+) is required as a cofactor. Requires Mn(2+) as cofactor.

It carries out the reaction NAD(+) + (deoxyribonucleotide)n-3'-hydroxyl + 5'-phospho-(deoxyribonucleotide)m = (deoxyribonucleotide)n+m + AMP + beta-nicotinamide D-nucleotide.. Functionally, DNA ligase that catalyzes the formation of phosphodiester linkages between 5'-phosphoryl and 3'-hydroxyl groups in double-stranded DNA using NAD as a coenzyme and as the energy source for the reaction. It is essential for DNA replication and repair of damaged DNA. This chain is DNA ligase, found in Nitratiruptor sp. (strain SB155-2).